Here is a 306-residue protein sequence, read N- to C-terminus: Agmatinase (306 aa).

Mn(2+) is bound by residues histidine 126, aspartate 149, histidine 151, aspartate 153, aspartate 230, and aspartate 232.

Belongs to the arginase family. Agmatinase subfamily. Requires Mn(2+) as cofactor.

The catalysed reaction is agmatine + H2O = urea + putrescine. It participates in amine and polyamine biosynthesis; putrescine biosynthesis via agmatine pathway; putrescine from agmatine: step 1/1. In terms of biological role, catalyzes the formation of putrescine from agmatine. This is Agmatinase from Cronobacter sakazakii (strain ATCC BAA-894) (Enterobacter sakazakii).